The primary structure comprises 149 residues: Transcriptional repressor NrdR (149 aa).

Residues 3-34 (CPFCSHPETQVVETRVAEDGDFVRRRRQCGAC) fold into a zinc finger. Residues 49–139 (PNVVKKDGRR…VYRNFEDIDE (91 aa)) enclose the ATP-cone domain.

It belongs to the NrdR family. Requires Zn(2+) as cofactor.

Negatively regulates transcription of bacterial ribonucleotide reductase nrd genes and operons by binding to NrdR-boxes. The protein is Transcriptional repressor NrdR of Paracidovorax citrulli (strain AAC00-1) (Acidovorax citrulli).